A 424-amino-acid polypeptide reads, in one-letter code: Kynureninase (424 aa).

Pyridoxal 5'-phosphate-binding positions include leucine 106, threonine 107, 134-137, aspartate 219, histidine 222, and tyrosine 244; that span reads FPSD. N6-(pyridoxal phosphate)lysine is present on lysine 245. Pyridoxal 5'-phosphate-binding residues include tryptophan 274 and asparagine 302.

This sequence belongs to the kynureninase family. In terms of assembly, homodimer. Pyridoxal 5'-phosphate is required as a cofactor.

The catalysed reaction is L-kynurenine + H2O = anthranilate + L-alanine + H(+). It catalyses the reaction 3-hydroxy-L-kynurenine + H2O = 3-hydroxyanthranilate + L-alanine + H(+). It participates in amino-acid degradation; L-kynurenine degradation; L-alanine and anthranilate from L-kynurenine: step 1/1. Its pathway is cofactor biosynthesis; NAD(+) biosynthesis; quinolinate from L-kynurenine: step 2/3. Its function is as follows. Catalyzes the cleavage of L-kynurenine (L-Kyn) and L-3-hydroxykynurenine (L-3OHKyn) into anthranilic acid (AA) and 3-hydroxyanthranilic acid (3-OHAA), respectively. The protein is Kynureninase of Xanthomonas campestris pv. campestris (strain 8004).